The primary structure comprises 131 residues: Profilin-3 (131 aa).

The cysteines at positions 13 and 115 are disulfide-linked. Residues 81 to 97 (AVIRGKKGAGGITIKKT) carry the Involved in PIP2 interaction motif. At Thr-111 the chain carries Phosphothreonine.

The protein belongs to the profilin family. As to quaternary structure, occurs in many kinds of cells as a complex with monomeric actin in a 1:1 ratio. In terms of processing, phosphorylated by MAP kinases.

It localises to the cytoplasm. Its subcellular location is the cytoskeleton. Functionally, binds to actin and affects the structure of the cytoskeleton. At high concentrations, profilin prevents the polymerization of actin, whereas it enhances it at low concentrations. By binding to PIP2, it inhibits the formation of IP3 and DG. The chain is Profilin-3 (PRO3) from Phleum pratense (Common timothy).